We begin with the raw amino-acid sequence, 108 residues long: Replication initiation control protein YabA (108 aa).

The Zn(2+) site is built by His83, Cys85, Cys99, and Cys102.

This sequence belongs to the YabA family. In terms of assembly, homotetramer. Interacts with both DnaA and DnaN, acting as a bridge between these two proteins. The cofactor is Zn(2+).

Its subcellular location is the cytoplasm. The protein localises to the nucleoid. Its function is as follows. Involved in control of chromosome replication initiation. Inhibits the cooperative binding of DnaA to the oriC region, thus negatively regulating initiation of chromosome replication. Inhibits the ability of DnaA-ATP to form a helix on DNA; does not disassemble preformed DnaA-DNA helices. Decreases the residence time of DnaA on the chromosome at its binding sites (oriC, replication forks and promoter-binding sites). Tethers DnaA to the replication machinery via the DNA polymerase beta sliding clamp subunit (dnaN). Associates with oriC and other DnaA targets on the chromosome in a DnaA-dependent manner. This chain is Replication initiation control protein YabA, found in Lactococcus lactis subsp. cremoris (strain SK11).